The primary structure comprises 69 residues: ATP synthase subunits region ORF 1 (69 aa).

The protein is ATP synthase subunits region ORF 1 of Fuscovulum blasticum (Rhodobacter blasticus).